Reading from the N-terminus, the 631-residue chain is Polyadenylate-binding protein, cytoplasmic and nuclear (631 aa).

Residues 1-56 (MSDLQESLEKLSINEKAPQAPADDATPSNTTTLEKESSESAAAAAGEGAGEEGEEA) form a disordered region. RRM domains are found at residues 58-136 (ASLY…WSQR), 146-223 (GNIF…KHVS), 239-316 (TNVY…RAQK), and 342-419 (VNLF…LAQR). A disordered region spans residues 518–545 (GGEFNGPNGQRQQRGAYPPNRNQKGGRP). A PABC domain is found at 545–626 (PQRDLAAIIS…ALTAFEEYKK (82 aa)).

Belongs to the polyadenylate-binding protein type-1 family.

It localises to the cytoplasm. The protein resides in the nucleus. Its function is as follows. Binds the poly(A) tail of mRNA. Appears to be an important mediator of the multiple roles of the poly(A) tail in mRNA biogenesis, stability and translation. In the nucleus, involved in both mRNA cleavage and polyadenylation. Is also required for efficient mRNA export to the cytoplasm. Acts in concert with a poly(A)-specific nuclease (PAN) to affect poly(A) tail shortening, which may occur concomitantly with either nucleocytoplasmic mRNA transport or translational initiation. In the cytoplasm, stimulates translation initiation and regulates mRNA decay through translation termination-coupled poly(A) shortening, probably mediated by PAN. The polypeptide is Polyadenylate-binding protein, cytoplasmic and nuclear (PAB1) (Meyerozyma guilliermondii (strain ATCC 6260 / CBS 566 / DSM 6381 / JCM 1539 / NBRC 10279 / NRRL Y-324) (Yeast)).